Reading from the N-terminus, the 166-residue chain is Thioredoxin, mitochondrial (166 aa).

The transit peptide at 1 to 59 directs the protein to the mitochondrion; it reads MAQRLLLRRFLTSVISRKPPQGVWASLTSTSLQTPPYNAGGLTGTPSPARTFHTTRVCS. Residues 61–166 enclose the Thioredoxin domain; that stretch reads TFNVQDGPDF…LEAFLKKLIG (106 aa). Catalysis depends on nucleophile residues Cys90 and Cys93. A disulfide bond links Cys90 and Cys93. At Lys152 the chain carries N6-acetyllysine; alternate. Lys152 bears the N6-succinyllysine; alternate mark.

It belongs to the thioredoxin family. In terms of assembly, monomer. As to expression, expressed in several tissues with the highest expression levels in heart, muscle, kidney and adrenal gland.

The protein localises to the mitochondrion. Important for the control of mitochondrial reactive oxygen species homeostasis, apoptosis regulation and cell viability. Is involved in various redox reactions including the reduction of protein disulfide bonds, through the reversible oxidation of its active center dithiol to a disulfide. This Rattus norvegicus (Rat) protein is Thioredoxin, mitochondrial (Txn2).